Consider the following 468-residue polypeptide: Cysteine--tRNA ligase (468 aa).

Cys-29 contributes to the Zn(2+) binding site. Positions 31–41 (PTVYNYIHIGN) match the 'HIGH' region motif. Zn(2+) is bound by residues Cys-209, His-234, and Glu-238. The 'KMSKS' region motif lies at 266 to 270 (KMSKS). Lys-269 provides a ligand contact to ATP. Ser-270 is subject to Phosphoserine.

The protein belongs to the class-I aminoacyl-tRNA synthetase family. In terms of assembly, monomer. The cofactor is Zn(2+).

Its subcellular location is the cytoplasm. The enzyme catalyses tRNA(Cys) + L-cysteine + ATP = L-cysteinyl-tRNA(Cys) + AMP + diphosphate. In Oceanobacillus iheyensis (strain DSM 14371 / CIP 107618 / JCM 11309 / KCTC 3954 / HTE831), this protein is Cysteine--tRNA ligase.